The following is a 253-amino-acid chain: 2-C-methyl-D-erythritol 4-phosphate cytidylyltransferase (253 aa).

This sequence belongs to the IspD/TarI cytidylyltransferase family. IspD subfamily.

The catalysed reaction is 2-C-methyl-D-erythritol 4-phosphate + CTP + H(+) = 4-CDP-2-C-methyl-D-erythritol + diphosphate. Its pathway is isoprenoid biosynthesis; isopentenyl diphosphate biosynthesis via DXP pathway; isopentenyl diphosphate from 1-deoxy-D-xylulose 5-phosphate: step 2/6. Catalyzes the formation of 4-diphosphocytidyl-2-C-methyl-D-erythritol from CTP and 2-C-methyl-D-erythritol 4-phosphate (MEP). This Idiomarina loihiensis (strain ATCC BAA-735 / DSM 15497 / L2-TR) protein is 2-C-methyl-D-erythritol 4-phosphate cytidylyltransferase.